A 155-amino-acid polypeptide reads, in one-letter code: Putative pre-16S rRNA nuclease (155 aa).

This sequence belongs to the YqgF nuclease family.

It localises to the cytoplasm. Its function is as follows. Could be a nuclease involved in processing of the 5'-end of pre-16S rRNA. This chain is Putative pre-16S rRNA nuclease, found in Wolbachia sp. subsp. Drosophila simulans (strain wRi).